The chain runs to 209 residues: Large ribosomal subunit protein uL4 (209 aa).

The segment at 47 to 72 is disordered; sequence TSSTKTRSEVRGSSKKPWKQKGTGRA. The span at 59 to 72 shows a compositional bias: basic residues; it reads SSKKPWKQKGTGRA.

Belongs to the universal ribosomal protein uL4 family. Part of the 50S ribosomal subunit.

Its function is as follows. One of the primary rRNA binding proteins, this protein initially binds near the 5'-end of the 23S rRNA. It is important during the early stages of 50S assembly. It makes multiple contacts with different domains of the 23S rRNA in the assembled 50S subunit and ribosome. In terms of biological role, forms part of the polypeptide exit tunnel. This chain is Large ribosomal subunit protein uL4, found in Borreliella burgdorferi (strain ZS7) (Borrelia burgdorferi).